A 139-amino-acid polypeptide reads, in one-letter code: Ribulose bisphosphate carboxylase small subunit (139 aa).

The protein belongs to the RuBisCO small chain family. Heterohexadecamer of 8 large and 8 small subunits.

The protein resides in the plastid. It localises to the chloroplast. RuBisCO catalyzes two reactions: the carboxylation of D-ribulose 1,5-bisphosphate, the primary event in carbon dioxide fixation, as well as the oxidative fragmentation of the pentose substrate in the photorespiration process. Both reactions occur simultaneously and in competition at the same active site. Although the small subunit is not catalytic it is essential for maximal activity. The protein is Ribulose bisphosphate carboxylase small subunit of Olisthodiscus luteus (Marine phytoflagellate).